The chain runs to 491 residues: NADH-quinone oxidoreductase subunit N (491 aa).

14 consecutive transmembrane segments (helical) span residues 11-31 (ATAE…TTFA), 38-58 (LAYG…YNTA), 74-94 (LLGD…LLYG), 106-126 (PEYY…VTSN), 128-148 (LLSM…LVAF), 163-183 (FVLG…LYGA), 206-226 (LLFG…VVPF), 243-263 (LIIA…LLVW), 272-292 (WQTM…LAAI), 301-321 (LAYS…SGVV), 336-356 (MFYA…IILL), 379-399 (FAAM…FIGF), 410-430 (VAAG…IGAF), and 465-485 (LAIA…TFVL).

This sequence belongs to the complex I subunit 2 family. In terms of assembly, NDH-1 is composed of 14 different subunits. Subunits NuoA, H, J, K, L, M, N constitute the membrane sector of the complex.

It localises to the cell inner membrane. It catalyses the reaction a quinone + NADH + 5 H(+)(in) = a quinol + NAD(+) + 4 H(+)(out). In terms of biological role, NDH-1 shuttles electrons from NADH, via FMN and iron-sulfur (Fe-S) centers, to quinones in the respiratory chain. The immediate electron acceptor for the enzyme in this species is believed to be ubiquinone. Couples the redox reaction to proton translocation (for every two electrons transferred, four hydrogen ions are translocated across the cytoplasmic membrane), and thus conserves the redox energy in a proton gradient. The polypeptide is NADH-quinone oxidoreductase subunit N (Azoarcus sp. (strain BH72)).